We begin with the raw amino-acid sequence, 321 residues long: Malate dehydrogenase (321 aa).

NAD(+) contacts are provided by residues 10-15 (GSGMIG) and Asp-34. Residues Arg-83 and Arg-89 each contribute to the substrate site. NAD(+) contacts are provided by residues Asn-96 and 119 to 121 (ITN). Substrate contacts are provided by Asn-121 and Arg-152. His-176 functions as the Proton acceptor in the catalytic mechanism.

The protein belongs to the LDH/MDH superfamily. MDH type 3 family.

The catalysed reaction is (S)-malate + NAD(+) = oxaloacetate + NADH + H(+). Its function is as follows. Catalyzes the reversible oxidation of malate to oxaloacetate. The sequence is that of Malate dehydrogenase from Bartonella bacilliformis (strain ATCC 35685 / KC583 / Herrer 020/F12,63).